The following is a 548-amino-acid chain: Thermosome subunit alpha (548 aa).

Positions 527-548 (TKPEGGQGGGMPGGMGGMDMGM) are disordered. A compositionally biased stretch (gly residues) spans 531-548 (GGQGGGMPGGMGGMDMGM).

It belongs to the TCP-1 chaperonin family. In terms of assembly, forms a Heterooligomeric complex of two stacked eight-membered rings.

In terms of biological role, molecular chaperone; binds unfolded polypeptides in vitro, and has a weak ATPase activity. In Thermococcus sp. (strain JCM 11816 / KS-1), this protein is Thermosome subunit alpha (thsA).